A 1042-amino-acid polypeptide reads, in one-letter code: Disintegrin and metalloproteinase domain-containing protein unc-71 (1042 aa).

A signal peptide spans 1–23; it reads MICASKITMLGLLVMCTLGGVLG. Topologically, residues 24-746 are extracellular; that stretch reads KVDIRQTTAN…NIGTTLETAT (723 aa). Asn103 and Asn155 each carry an N-linked (GlcNAc...) asparagine glycan. The region spanning 227-431 is the Peptidase M12B domain; that stretch reads KYVEVALIAD…GNIQCLLNKP (205 aa). 4 disulfides stabilise this stretch: Cys338-Cys426, Cys378-Cys410, Cys380-Cys386, and Cys496-Cys516. The region spanning 437-524 is the Disintegrin domain; the sequence is LRECGNGVVD…DCPPDGHLID (88 aa). An N-linked (GlcNAc...) asparagine glycan is attached at Asn538. Positions 662–699 constitute an EGF-like domain; that stretch reads SATACPTNNLALLCSGHGHCTTTARCVCFNGWSGVACD. 3 disulfides stabilise this stretch: Cys666–Cys681, Cys675–Cys687, and Cys689–Cys698. Residue Asn703 is glycosylated (N-linked (GlcNAc...) asparagine). Residues 747–767 form a helical membrane-spanning segment; sequence LFAILLGFGVFLLLCLVCLML. The Cytoplasmic portion of the chain corresponds to 768 to 1042; that stretch reads CYRRRSVVEI…KLEMTNSMHN (275 aa). Disordered regions lie at residues 779 to 809, 825 to 850, and 980 to 1028; these read KPSD…RKRK, DERD…RRNG, and HDVG…PSLF. Positions 825–836 are enriched in basic and acidic residues; sequence DERDSTSLRSRD. The span at 1002–1027 shows a compositional bias: polar residues; the sequence is DSPTLVNGASSSSTSNNYNFRQSPSL.

It localises to the cell membrane. In terms of biological role, involved in the migration of sex myoblasts (progenitors of egg-laying muscles), Q neuroblasts and BDU interneurons during development. Involved in axon branching and guidance of neurons including GABAergic type D motor neurons. Promotes sex myoblast migration and positioning independently of gonad attraction cues. May act downstream of mig-13 in order to promote the guidance, migration and positioning of Q neuroblasts and their descendants along the anteroposterior body axis. Required for coordinated movements. This Caenorhabditis elegans protein is Disintegrin and metalloproteinase domain-containing protein unc-71.